We begin with the raw amino-acid sequence, 480 residues long: Glutamate--tRNA ligase (480 aa).

Residues 21–31 carry the 'HIGH' region motif; that stretch reads PSPTGYLHVGG. Zn(2+)-binding residues include C110, C112, C137, and H139. The 'KMSKS' region motif lies at 248 to 252; it reads KLSKR. K251 is a binding site for ATP.

This sequence belongs to the class-I aminoacyl-tRNA synthetase family. Glutamate--tRNA ligase type 1 subfamily. Monomer. Zn(2+) is required as a cofactor.

Its subcellular location is the cytoplasm. The catalysed reaction is tRNA(Glu) + L-glutamate + ATP = L-glutamyl-tRNA(Glu) + AMP + diphosphate. In terms of biological role, catalyzes the attachment of glutamate to tRNA(Glu) in a two-step reaction: glutamate is first activated by ATP to form Glu-AMP and then transferred to the acceptor end of tRNA(Glu). In Haemophilus influenzae (strain PittEE), this protein is Glutamate--tRNA ligase.